The sequence spans 350 residues: Probable choline kinase 2 (350 aa).

Residues Arg-73, Gln-210, and Asp-227 each coordinate ATP.

It belongs to the choline/ethanolamine kinase family.

It carries out the reaction choline + ATP = phosphocholine + ADP + H(+). Its pathway is phospholipid metabolism; phosphatidylcholine biosynthesis; phosphocholine from choline: step 1/1. Involved in phospholipid biosynthesis. Catalyzes the first step in phosphatidylcholine biosynthesis. This is Probable choline kinase 2 from Arabidopsis thaliana (Mouse-ear cress).